Consider the following 506-residue polypeptide: SPbeta prophage-derived uncharacterized protein YonE (506 aa).

The segment at 473–506 is disordered; the sequence is YTFTGNEVGRPNEGNKNNDNTVKSATSNGNDNPI. Over residues 486-506 the composition is skewed to polar residues; that stretch reads GNKNNDNTVKSATSNGNDNPI.

The chain is SPbeta prophage-derived uncharacterized protein YonE (yonE) from Bacillus subtilis (strain 168).